A 761-amino-acid polypeptide reads, in one-letter code: Mitochondrial intermediate peptidase (761 aa).

The N-terminal 37 residues, 1–37 (MLIQKILLNKEISRLPRILSILNYTGLRWLSGSSGRN), are a transit peptide targeting the mitochondrion. His-547 is a binding site for Zn(2+). Residue Glu-548 is part of the active site. Residues His-551 and His-554 each contribute to the Zn(2+) site.

The protein belongs to the peptidase M3 family. The cofactor is Zn(2+).

It localises to the mitochondrion matrix. It catalyses the reaction Release of an N-terminal octapeptide as second stage of processing of some proteins imported into the mitochondrion.. Cleaves proteins, imported into the mitochondrion, to their mature size. While most mitochondrial precursor proteins are processed to the mature form in one step by mitochondrial processing peptidase (MPP), the sequential cleavage by MIP of an octapeptide after initial processing by MPP is a required step for a subgroup of nuclear-encoded precursor proteins destined for the matrix or the inner membrane. The protein is Mitochondrial intermediate peptidase (OCT1) of Candida glabrata (strain ATCC 2001 / BCRC 20586 / JCM 3761 / NBRC 0622 / NRRL Y-65 / CBS 138) (Yeast).